We begin with the raw amino-acid sequence, 234 residues long: ATP-dependent dethiobiotin synthetase BioD (234 aa).

ATP is bound at residue 12–17; that stretch reads DVGKTF. T16 is a Mg(2+) binding site. The active site involves K37. T41 lines the substrate pocket. Residues D54 and 115 to 118 each bind ATP; that span reads EGAG. Residues D54 and E115 each contribute to the Mg(2+) site.

Belongs to the dethiobiotin synthetase family. Homodimer. Requires Mg(2+) as cofactor.

Its subcellular location is the cytoplasm. The catalysed reaction is (7R,8S)-7,8-diammoniononanoate + CO2 + ATP = (4R,5S)-dethiobiotin + ADP + phosphate + 3 H(+). It participates in cofactor biosynthesis; biotin biosynthesis; biotin from 7,8-diaminononanoate: step 1/2. Its function is as follows. Catalyzes a mechanistically unusual reaction, the ATP-dependent insertion of CO2 between the N7 and N8 nitrogen atoms of 7,8-diaminopelargonic acid (DAPA, also called 7,8-diammoniononanoate) to form a ureido ring. This Lysinibacillus sphaericus (Bacillus sphaericus) protein is ATP-dependent dethiobiotin synthetase BioD.